Reading from the N-terminus, the 464-residue chain is MSNETPKKFIPNEQNPMPRWEKKFNKILTPFERFVNRTTTGGLILMMAALIALALANSPLAHHYLHALHVPLGLNLGDWRIEKSLHHWVNDGLMALFFFVVGLELKREMLVGELAEIRKAVLPIVAAIGGMVIPAICYMSLNLNDETFRGWGIPMATDIAFALGVIALLASRVPKALITFLVALAIVDDLGAVVVIAVFYTQDLAWSFLIAGALLTCLLIFFNMIGIRKPSVYFFVGLILWFVFLKSGVHATLAGVITAFTIPAKPKFNTLTFSNRVQDILYKFRKGCEEDESILRNEHLSGLVQTLENGVVGVQTPLQRLEHSFHKPVAFFILPVFAIFNAGVTIDFGNAFQLFNHPITLGVVFGLLFGKFVGITGASWLAIRFGLCSLPNDTSMKHIIGASMLGSIGFTMSIFIAELAFVSQPEMIIQAKLGILLSSLVAGVAGYLWLHKLGGEKSRIGSSL.

11 helical membrane passes run 41–61 (GGLI…SPLA), 85–105 (LHHW…GLEL), 121–141 (VLPI…YMSL), 150–170 (GWGI…ALLA), 180–200 (FLVA…AVFY), 207–227 (SFLI…MIGI), 234–254 (FFVG…ATLA), 329–349 (VAFF…IDFG), 363–383 (VVFG…WLAI), 399–419 (IIGA…IAEL), and 428–448 (IIQA…AGYL).

Belongs to the NhaA Na(+)/H(+) (TC 2.A.33) antiporter family.

It localises to the cell inner membrane. The enzyme catalyses Na(+)(in) + 2 H(+)(out) = Na(+)(out) + 2 H(+)(in). Na(+)/H(+) antiporter that extrudes sodium in exchange for external protons. In Saccharophagus degradans (strain 2-40 / ATCC 43961 / DSM 17024), this protein is Na(+)/H(+) antiporter NhaA 1.